The chain runs to 267 residues: Endonuclease NucS (267 aa).

This sequence belongs to the NucS endonuclease family.

Its subcellular location is the cytoplasm. Cleaves both 3' and 5' ssDNA extremities of branched DNA structures. The protein is Endonuclease NucS of Pyrococcus furiosus (strain ATCC 43587 / DSM 3638 / JCM 8422 / Vc1).